We begin with the raw amino-acid sequence, 4306 residues long: Cytoplasmic dynein 2 heavy chain 1 (4306 aa).

A stem region spans residues 1 to 1650 (MAGSLGDVRK…YVQMVDSELQ (1650 aa)). An ATP-binding site is contributed by 145 to 152 (LGIVLRKS). Residues 669–696 (KELEGYIQKLQNAAERLATENRRLRKWH) are a coiled coil. AAA stretches follow at residues 1651 to 1875 (YTYE…VLRG), 1941 to 2161 (SALK…KQND), 2249 to 2505 (LTAD…WVLG), and 2617 to 2862 (HYGR…ESCK). ATP-binding positions include 1689–1696 (GPAGTGKT), 1979–1986 (GPSGAGKS), 2291–2298 (GPEGCGKG), and 2655–2662 (GRSGVGRR). Residues 2880–3168 (AISSSKKKEL…AEVSKAQETI (289 aa)) are stalk. Coiled coils occupy residues 2896-2981 (LQAG…KEVQ), 3108-3199 (LETE…LATL), and 3407-3441 (IQHEKPDLEEQKTKLLQQEEDKKIQLARLEESLLE). AAA stretches follow at residues 3243–3472 (LCTE…LIQD) and 3689–3904 (MALF…VIDR).

Belongs to the dynein heavy chain family. As to quaternary structure, the cytoplasmic dynein complex 2 is probably composed by a heavy chain DYNC2H1 homodimer and a number of DYNC2LI1 light intermediate chains. Detected in brain, lung, spleen and kidney (at protein level). Enriched in the ependymal layer lining the lateral ventricles (at protein level).

The protein localises to the cytoplasm. Its subcellular location is the cytoskeleton. It localises to the cilium axoneme. It is found in the cell membrane. Functionally, may function as a motor for intraflagellar retrograde transport. Functions in cilia biogenesis. According to PubMed:8666668, it may play a role in transport between endoplasmic reticulum and Golgi or organization of the Golgi in cells. The sequence is that of Cytoplasmic dynein 2 heavy chain 1 (Dync2h1) from Mus musculus (Mouse).